We begin with the raw amino-acid sequence, 235 residues long: Small heat shock protein, chloroplastic (235 aa).

Disordered regions lie at residues methionine 1–isoleucine 23 and threonine 51–proline 80. The span at glycine 52 to histidine 63 shows a compositional bias: basic and acidic residues. Over residues serine 64 to threonine 74 the composition is skewed to polar residues. One can recognise a sHSP domain in the interval serine 126–asparagine 235.

The protein belongs to the small heat shock protein (HSP20) family. As to expression, in fruits, flowers, leaves, and stems.

It is found in the plastid. The protein resides in the chloroplast. This chain is Small heat shock protein, chloroplastic (HSP21), found in Solanum lycopersicum (Tomato).